The following is a 136-amino-acid chain: Large ribosomal subunit protein uL16c (136 aa).

The interval 1-20 is disordered; that stretch reads MLSPKRTRFRKQHRGRMKGK.

It belongs to the universal ribosomal protein uL16 family. As to quaternary structure, part of the 50S ribosomal subunit.

It is found in the plastid. It localises to the chloroplast. In Agrostis stolonifera (Creeping bentgrass), this protein is Large ribosomal subunit protein uL16c.